A 339-amino-acid polypeptide reads, in one-letter code: DNA-directed RNA polymerase subunit alpha (339 aa).

Residues M1–D238 form an alpha N-terminal domain (alpha-NTD) region. Residues L255 to V339 form an alpha C-terminal domain (alpha-CTD) region.

The protein belongs to the RNA polymerase alpha chain family. Homodimer. The RNAP catalytic core consists of 2 alpha, 1 beta, 1 beta' and 1 omega subunit. When a sigma factor is associated with the core the holoenzyme is formed, which can initiate transcription.

It carries out the reaction RNA(n) + a ribonucleoside 5'-triphosphate = RNA(n+1) + diphosphate. DNA-dependent RNA polymerase catalyzes the transcription of DNA into RNA using the four ribonucleoside triphosphates as substrates. The polypeptide is DNA-directed RNA polymerase subunit alpha (Anaeromyxobacter sp. (strain Fw109-5)).